The chain runs to 126 residues: SH2 domain-containing protein 1A (126 aa).

Residues 6 to 102 (VYHGKISREM…GIVTPLQYPV (97 aa)) enclose the SH2 domain. The interaction with FYN SH3 domain stretch occupies residues 67 to 92 (ETAPGVHKRFFRKVKNLISAFQKPDQ). K89 is subject to N6-acetyllysine. Residues 100–126 (YPVEKSSARSPQAPTGRRDSDICLKAP) form a disordered region. The span at 115–126 (GRRDSDICLKAP) shows a compositional bias: basic and acidic residues. Position 119 is a phosphoserine (S119).

As to quaternary structure, interacts with CD84, CD244, LY9, SLAMF1 and FYN. Interacts with NTRK1, NTRK2 and NTRK3.

It is found in the cytoplasm. Functionally, cytoplasmic adapter regulating receptors of the signaling lymphocytic activation molecule (SLAM) family such as SLAMF1, CD244, LY9, CD84, SLAMF6 and SLAMF7. In SLAM signaling seems to cooperate with SH2D1B/EAT-2. Initially it has been proposed that association with SLAMF1 prevents SLAMF1 binding to inhibitory effectors including INPP5D/SHIP1 and PTPN11/SHP-2. However, by simultaneous interactions, recruits FYN which subsequently phosphorylates and activates SLAMF1. Positively regulates CD244/2B4- and CD84-mediated natural killer (NK) cell functions. Can also promote CD48-, SLAMF6 -, LY9-, and SLAMF7-mediated NK cell activation. In the context of NK cell-mediated cytotoxicity enhances conjugate formation with target cells. May also regulate the activity of the neurotrophin receptors NTRK1, NTRK2 and NTRK3. This is SH2 domain-containing protein 1A (Sh2d1a) from Rattus norvegicus (Rat).